A 174-amino-acid polypeptide reads, in one-letter code: MGKITFYEDRGFQGRHYECSTDHSNLQPYFSRCNSVRVDSGCWMLYEQPNFTGCQYFLRRGDYPDYQQWMGFSDSVRSCRLIPHSSSHRIRIYEREDYRGQMVEITDDCPHLQDRFHFSDFHSFHVMEGYWVLYEMPNYRGRQYLLRPGEYRRYHDWGAMNARVGSLRRIMDFY.

2 Beta/gamma crystallin 'Greek key' domains span residues 2-40 and 41-83; these read GKIT…RVDS and GCWM…RLIP. The interval 84-87 is connecting peptide; the sequence is HSSS. 2 consecutive Beta/gamma crystallin 'Greek key' domains span residues 88-128 and 129-171; these read HRIR…HVME and GYWV…RRIM.

The protein belongs to the beta/gamma-crystallin family. As to expression, detected in the superior olivary complex and fibers of the ventral aoustic stria of the auditory hindbrain.

Functionally, crystallins are the dominant structural components of the vertebrate eye lens. This is Gamma-crystallin E (Cryge) from Rattus norvegicus (Rat).